A 196-amino-acid polypeptide reads, in one-letter code: Large ribosomal subunit protein bL9 (196 aa).

A disordered region spans residues 172–196 (NESARPEAFFDPEAEIEQEEGEENA). The span at 181–196 (FDPEAEIEQEEGEENA) shows a compositional bias: acidic residues.

Belongs to the bacterial ribosomal protein bL9 family.

Binds to the 23S rRNA. The polypeptide is Large ribosomal subunit protein bL9 (Chelativorans sp. (strain BNC1)).